We begin with the raw amino-acid sequence, 456 residues long: Bifunctional protein GlmU (456 aa).

The segment at 1-229 (MLNSAMSVVI…ISETDGVNNR (229 aa)) is pyrophosphorylase. Residues 11-14 (LAAG), Lys25, Gln76, 81-82 (GT), 103-105 (YGD), Gly140, Glu154, Asn169, and Asn227 contribute to the UDP-N-acetyl-alpha-D-glucosamine site. Asp105 is a Mg(2+) binding site. Asn227 serves as a coordination point for Mg(2+). The linker stretch occupies residues 230 to 250 (LQLSRLERIYQAEQAEKLLLS). Residues 251-456 (GVMLRDPARF…QGWQRPVKKK (206 aa)) form an N-acetyltransferase region. 2 residues coordinate UDP-N-acetyl-alpha-D-glucosamine: Arg333 and Lys351. His363 acts as the Proton acceptor in catalysis. UDP-N-acetyl-alpha-D-glucosamine contacts are provided by Tyr366 and Asn377. Acetyl-CoA is bound by residues Ala380, 386 to 387 (NY), Ser405, Ala423, and Arg440.

The protein in the N-terminal section; belongs to the N-acetylglucosamine-1-phosphate uridyltransferase family. In the C-terminal section; belongs to the transferase hexapeptide repeat family. In terms of assembly, homotrimer. The cofactor is Mg(2+).

The protein resides in the cytoplasm. It catalyses the reaction alpha-D-glucosamine 1-phosphate + acetyl-CoA = N-acetyl-alpha-D-glucosamine 1-phosphate + CoA + H(+). The enzyme catalyses N-acetyl-alpha-D-glucosamine 1-phosphate + UTP + H(+) = UDP-N-acetyl-alpha-D-glucosamine + diphosphate. It functions in the pathway nucleotide-sugar biosynthesis; UDP-N-acetyl-alpha-D-glucosamine biosynthesis; N-acetyl-alpha-D-glucosamine 1-phosphate from alpha-D-glucosamine 6-phosphate (route II): step 2/2. Its pathway is nucleotide-sugar biosynthesis; UDP-N-acetyl-alpha-D-glucosamine biosynthesis; UDP-N-acetyl-alpha-D-glucosamine from N-acetyl-alpha-D-glucosamine 1-phosphate: step 1/1. The protein operates within bacterial outer membrane biogenesis; LPS lipid A biosynthesis. In terms of biological role, catalyzes the last two sequential reactions in the de novo biosynthetic pathway for UDP-N-acetylglucosamine (UDP-GlcNAc). The C-terminal domain catalyzes the transfer of acetyl group from acetyl coenzyme A to glucosamine-1-phosphate (GlcN-1-P) to produce N-acetylglucosamine-1-phosphate (GlcNAc-1-P), which is converted into UDP-GlcNAc by the transfer of uridine 5-monophosphate (from uridine 5-triphosphate), a reaction catalyzed by the N-terminal domain. The protein is Bifunctional protein GlmU of Salmonella heidelberg (strain SL476).